The sequence spans 287 residues: Large ribosomal subunit protein uL5m (287 aa).

Residues 1 to 18 constitute a mitochondrion transit peptide; the sequence is MLGIRKNIRISVNFLQRR. Over residues 80–89 the composition is skewed to basic and acidic residues; sequence DEHTQKDRLP. The interval 80–109 is disordered; that stretch reads DEHTQKDRLPRWIGDNPYYKNRPPQKMRGN.

Belongs to the universal ribosomal protein uL5 family. Component of the mitochondrial large ribosomal subunit (mt-LSU). Mature yeast 74S mitochondrial ribosomes consist of a small (37S) and a large (54S) subunit. The 37S small subunit contains a 15S ribosomal RNA (15S mt-rRNA) and at least 32 different proteins. The 54S large subunit contains a 21S rRNA (21S mt-rRNA) and at least 45 different proteins. Unlike bacterial L5, uL5m does not bind zinc.

It localises to the mitochondrion. Functionally, component of the mitochondrial ribosome (mitoribosome), a dedicated translation machinery responsible for the synthesis of mitochondrial genome-encoded proteins, including at least some of the essential transmembrane subunits of the mitochondrial respiratory chain. The mitoribosomes are attached to the mitochondrial inner membrane and translation products are cotranslationally integrated into the membrane. The protein is Large ribosomal subunit protein uL5m (mrpl7) of Schizosaccharomyces pombe (strain 972 / ATCC 24843) (Fission yeast).